The primary structure comprises 342 residues: Succinylglutamate desuccinylase (342 aa).

Zn(2+)-binding residues include H63, E66, and H155. E219 is a catalytic residue.

This sequence belongs to the AspA/AstE family. Succinylglutamate desuccinylase subfamily. Zn(2+) serves as cofactor.

It catalyses the reaction N-succinyl-L-glutamate + H2O = L-glutamate + succinate. It functions in the pathway amino-acid degradation; L-arginine degradation via AST pathway; L-glutamate and succinate from L-arginine: step 5/5. Transforms N(2)-succinylglutamate into succinate and glutamate. In Vibrio campbellii (strain ATCC BAA-1116), this protein is Succinylglutamate desuccinylase.